A 272-amino-acid chain; its full sequence is MNTPQDSSLGREVSYPSQYDPGLLFPIPRSGARAEIGLDDAALPFVGHDRWHAFELSWLDPRGKPQVAVATVQVPCTSPRLIESKSFKLYLNSLNSTRIDSVEALRERLVTDLSACAGAPVQVAFGLPGLRETPLGESIDGLDVDIDCYGPPQADFLAADTSQVVEETLVSALLKSNCPVTGQPDWATVSLRYCGPKIDRAGLLRYLVSYREHAEFHEQCVERIFSEVSARCQPQWLEVEARYTRRGGLDINPWRASPGITAPAATYRELRQ.

Residue 82–84 coordinates substrate; that stretch reads IES. 84-85 contributes to the NADPH binding site; sequence SK. C178 (thioimide intermediate) is an active-site residue. D185 acts as the Proton donor in catalysis. 217–218 serves as a coordination point for substrate; the sequence is HE. 246-247 serves as a coordination point for NADPH; that stretch reads RG.

This sequence belongs to the GTP cyclohydrolase I family. QueF type 2 subfamily. In terms of assembly, homodimer.

The protein resides in the cytoplasm. The enzyme catalyses 7-aminomethyl-7-carbaguanine + 2 NADP(+) = 7-cyano-7-deazaguanine + 2 NADPH + 3 H(+). The protein operates within tRNA modification; tRNA-queuosine biosynthesis. Its function is as follows. Catalyzes the NADPH-dependent reduction of 7-cyano-7-deazaguanine (preQ0) to 7-aminomethyl-7-deazaguanine (preQ1). The chain is NADPH-dependent 7-cyano-7-deazaguanine reductase from Stenotrophomonas maltophilia (strain R551-3).